Consider the following 137-residue polypeptide: Small ribosomal subunit protein uS12 (137 aa).

Disordered stretches follow at residues methionine 1–serine 21 and lysine 33–lysine 57.

The protein belongs to the universal ribosomal protein uS12 family. As to quaternary structure, part of the 30S ribosomal subunit. Contacts proteins S8 and S17. May interact with IF1 in the 30S initiation complex.

Its function is as follows. With S4 and S5 plays an important role in translational accuracy. In terms of biological role, interacts with and stabilizes bases of the 16S rRNA that are involved in tRNA selection in the A site and with the mRNA backbone. Located at the interface of the 30S and 50S subunits, it traverses the body of the 30S subunit contacting proteins on the other side and probably holding the rRNA structure together. The combined cluster of proteins S8, S12 and S17 appears to hold together the shoulder and platform of the 30S subunit. This chain is Small ribosomal subunit protein uS12, found in Streptococcus pyogenes serotype M1.